Reading from the N-terminus, the 537-residue chain is Ceramide kinase (537 aa).

The tract at residues 1-115 (MGATGAAEPL…CPEEQLCHLW (115 aa)) is essential for enzyme activity. Residues 1-125 (MGATGAAEPL…LQTLREMLEK (125 aa)) are required for binding to sulfatide and phosphoinositides. In terms of domain architecture, DAGKc spans 128-278 (SRPKHLLVFI…MDVSSVHHNS (151 aa)). ATP-binding positions include 138–140 (NPF) and 170–174 (TEHAN). Substrate is bound at residue 195-198 (GGDG). Residue Asp197 is the Proton donor/acceptor of the active site. Residues Glu202, 239–241 (GST), Arg304, and Arg310 each bind ATP. Phosphoserine occurs at positions 340 and 408. An ATP-binding site is contributed by 502-504 (DGE).

Requires Ca(2+) as cofactor. Mg(2+) is required as a cofactor. In terms of tissue distribution, high level expression in heart, brain, skeletal muscle, kidney and liver; moderate in peripheral blood leukocytes and thymus; very low in spleen, small intestine, placenta and lung.

It is found in the cytoplasm. Its subcellular location is the cell membrane. The enzyme catalyses an N-acylsphing-4-enine + ATP = an N-acylsphing-4-enine 1-phosphate + ADP + H(+). The catalysed reaction is N-(hexanoyl)sphing-4-enine + ATP = N-hexanoylsphing-4-enine 1-phosphate + ADP + H(+). It carries out the reaction N-(acetyl)-sphing-4-enine + ATP = N-(acetyl)-sphing-4-enine-1-phosphate + ADP + H(+). It catalyses the reaction N-hexadecanoylsphing-4-enine + ATP = N-(hexadecanoyl)-sphing-4-enine-1-phosphate + ADP + H(+). The enzyme catalyses N-hexanoyl-(4R)-hydroxysphinganine + ATP = N-hexanoyl-(4R)-hydroxysphinganine-1-phosphate + ADP + H(+). With respect to regulation, inhibited by sulfatide. Inhibited by sphinganine, sphingenine, and N,N-Dimethylsphingosine (DMS). Cardiolipin at 0.1 uM significantly increases activity, whereas at concentrations &gt;1 uM has an inhibitory effect. Functionally, catalyzes specifically the phosphorylation of ceramide to form ceramide 1-phosphate. Acts efficiently on natural and analog ceramides (C6, C8, C16 ceramides, and C8-dihydroceramide), to a lesser extent on C2-ceramide and C6-dihydroceramide, but not on other lipids, such as various sphingosines. Shows a greater preference for D-erythro isomer of ceramides. Binds phosphoinositides. In Homo sapiens (Human), this protein is Ceramide kinase (CERK).